A 606-amino-acid chain; its full sequence is NADH-ubiquinone oxidoreductase chain 5 (606 aa).

14 helical membrane-spanning segments follow: residues 1–21 (MNMF…PIIM), 43–63 (AFMI…ETII), 87–107 (MIFV…SMWY), 117–137 (FFKY…ANNM), 140–160 (LFIG…WWYG), 171–191 (AVLY…WFLL), 241–261 (TPVS…FLLI), 273–293 (IQTL…ICAL), 310–330 (LGLM…LHIC), 365–385 (VLPF…GMPF), 409–429 (LLIT…IMFF), 457–477 (LLIG…PTTI), 488–508 (MTAL…NLTT), and 582–602 (GLIK…LLIL).

Belongs to the complex I subunit 5 family. Core subunit of respiratory chain NADH dehydrogenase (Complex I) which is composed of 45 different subunits.

It is found in the mitochondrion inner membrane. The enzyme catalyses a ubiquinone + NADH + 5 H(+)(in) = a ubiquinol + NAD(+) + 4 H(+)(out). Functionally, core subunit of the mitochondrial membrane respiratory chain NADH dehydrogenase (Complex I) which catalyzes electron transfer from NADH through the respiratory chain, using ubiquinone as an electron acceptor. Essential for the catalytic activity and assembly of complex I. The chain is NADH-ubiquinone oxidoreductase chain 5 (MT-ND5) from Canis lupus (Gray wolf).